The chain runs to 382 residues: Histidinol-phosphate aminotransferase (382 aa).

A disordered region spans residues 1–24; it reads MTSAPRPRPTLDDLPLREDLRGKS. The segment covering 9–22 has biased composition (basic and acidic residues); sequence PTLDDLPLREDLRG. Residue lysine 233 is modified to N6-(pyridoxal phosphate)lysine.

This sequence belongs to the class-II pyridoxal-phosphate-dependent aminotransferase family. Histidinol-phosphate aminotransferase subfamily. As to quaternary structure, homodimer. Pyridoxal 5'-phosphate serves as cofactor.

It catalyses the reaction L-histidinol phosphate + 2-oxoglutarate = 3-(imidazol-4-yl)-2-oxopropyl phosphate + L-glutamate. It functions in the pathway amino-acid biosynthesis; L-histidine biosynthesis; L-histidine from 5-phospho-alpha-D-ribose 1-diphosphate: step 7/9. The sequence is that of Histidinol-phosphate aminotransferase from Mycobacterium ulcerans (strain Agy99).